The primary structure comprises 193 residues: Protein GrpE (193 aa).

The tract at residues 1–26 (MTKKHHKEQEEIQETIKTEAAEENVG) is disordered. Over residues 7 to 20 (KEQEEIQETIKTEA) the composition is skewed to basic and acidic residues.

It belongs to the GrpE family. As to quaternary structure, homodimer.

Its subcellular location is the cytoplasm. Functionally, participates actively in the response to hyperosmotic and heat shock by preventing the aggregation of stress-denatured proteins, in association with DnaK and GrpE. It is the nucleotide exchange factor for DnaK and may function as a thermosensor. Unfolded proteins bind initially to DnaJ; upon interaction with the DnaJ-bound protein, DnaK hydrolyzes its bound ATP, resulting in the formation of a stable complex. GrpE releases ADP from DnaK; ATP binding to DnaK triggers the release of the substrate protein, thus completing the reaction cycle. Several rounds of ATP-dependent interactions between DnaJ, DnaK and GrpE are required for fully efficient folding. In Chlorobaculum parvum (strain DSM 263 / NCIMB 8327) (Chlorobium vibrioforme subsp. thiosulfatophilum), this protein is Protein GrpE.